A 455-amino-acid polypeptide reads, in one-letter code: NADH-quinone oxidoreductase subunit N (455 aa).

11 helical membrane-spanning segments follow: residues 25–45, 61–81, 99–119, 149–169, 193–213, 257–277, 285–305, 312–332, 355–375, 391–411, and 432–452; these read AIVP…ISEY, FSVA…ALSH, VFLL…MFFL, FLMG…IYGA, IGIV…PFHF, IQII…IMAL, MFAF…LLTS, LYYA…VMYV, AGIL…SGFF, IVVF…FKII, and IVAV…NVVL.

The protein belongs to the complex I subunit 2 family. NDH-1 is composed of 14 different subunits. Subunits NuoA, H, J, K, L, M, N constitute the membrane sector of the complex.

The protein resides in the cell inner membrane. The enzyme catalyses a quinone + NADH + 5 H(+)(in) = a quinol + NAD(+) + 4 H(+)(out). In terms of biological role, NDH-1 shuttles electrons from NADH, via FMN and iron-sulfur (Fe-S) centers, to quinones in the respiratory chain. The immediate electron acceptor for the enzyme in this species is believed to be a menaquinone. Couples the redox reaction to proton translocation (for every two electrons transferred, four hydrogen ions are translocated across the cytoplasmic membrane), and thus conserves the redox energy in a proton gradient. This is NADH-quinone oxidoreductase subunit N from Flavobacterium psychrophilum (strain ATCC 49511 / DSM 21280 / CIP 103535 / JIP02/86).